Consider the following 367-residue polypeptide: DNA replication and repair protein RecF (367 aa).

An ATP-binding site is contributed by 30–37 (GANGSGKT).

This sequence belongs to the RecF family.

The protein resides in the cytoplasm. The RecF protein is involved in DNA metabolism; it is required for DNA replication and normal SOS inducibility. RecF binds preferentially to single-stranded, linear DNA. It also seems to bind ATP. The polypeptide is DNA replication and repair protein RecF (Pseudomonas putida (strain GB-1)).